We begin with the raw amino-acid sequence, 145 residues long: tRNA-specific adenosine deaminase (145 aa).

The region spanning 1 to 116 is the CMP/dCMP-type deaminase domain; the sequence is MREALKQAEI…SNLRYFNSKA (116 aa). His-48 is a Zn(2+) binding site. The active-site Proton donor is Glu-50. Zn(2+)-binding residues include Cys-78 and Cys-81.

The protein belongs to the cytidine and deoxycytidylate deaminase family. In terms of assembly, homodimer. Requires Zn(2+) as cofactor.

The catalysed reaction is adenosine(34) in tRNA + H2O + H(+) = inosine(34) in tRNA + NH4(+). Functionally, catalyzes the deamination of adenosine to inosine at the wobble position 34 of tRNA(Arg2). The sequence is that of tRNA-specific adenosine deaminase from Rickettsia bellii (strain RML369-C).